Consider the following 229-residue polypeptide: Ras-like protein rasV (229 aa).

40-47 (GDGGVGKT) contacts GTP. The Effector region motif lies at 62–70 (YDPTIEDSY). GTP contacts are provided by residues 87-91 (DTAGQ) and 146-149 (NKSD). Cysteine 226 carries the post-translational modification Cysteine methyl ester. The S-geranylgeranyl cysteine moiety is linked to residue cysteine 226. A propeptide spans 227–229 (KVM) (removed in mature form).

The protein belongs to the small GTPase superfamily. Ras family.

It localises to the cell membrane. The catalysed reaction is GTP + H2O = GDP + phosphate + H(+). Ras proteins bind GDP/GTP and possess intrinsic GTPase activity. The sequence is that of Ras-like protein rasV (rasV) from Dictyostelium discoideum (Social amoeba).